Consider the following 195-residue polypeptide: uncharacterized protein (195 aa).

2 disordered regions span residues 1–51 (MTHN…GPSY) and 160–195 (SYSQ…KSCN). The segment covering 13 to 28 (SYQNQAPQPQYYTRQP) has biased composition (polar residues). Positions 170-189 (YYKKHKHHSHHRPKHVKSSR) are enriched in basic residues.

This is an uncharacterized protein from Acanthamoeba polyphaga mimivirus (APMV).